A 589-amino-acid polypeptide reads, in one-letter code: (E)-beta-ocimene synthase, chloroplastic (589 aa).

Residues 1-25 (MAAHNLCFNSAFVCNVHHQKTQHFP) constitute a chloroplast transit peptide. (2E,6E)-farnesyl diphosphate-binding residues include R302, D339, D343, R480, and N483. Mg(2+) is bound by residues D339 and D343. Positions 339–343 (DDIYD) match the DDXXD motif motif. The Mg(2+) site is built by N483, T487, and E491.

Belongs to the terpene synthase family. Tpsb subfamily. It depends on Mg(2+) as a cofactor. Requires Mn(2+) as cofactor. Expressed exclusively in flowers.

The protein localises to the plastid. It localises to the chloroplast. The enzyme catalyses (2E,6E)-farnesyl diphosphate = (3E,6E)-alpha-farnesene + diphosphate. It participates in secondary metabolite biosynthesis; terpenoid biosynthesis. Predominantly involved in monoterpene (C10) biosynthesis. Using GPP as substrate, the major product is (E)-beta-ocimene with minor amounts of (Z)-beta-ocimene and myrcene. Using FPP as substrate, could also be able to synthesize in vitro sesquiterpenes (C15) with (E,E)-alpha-farnesene as the major product and with (Z,E)-alpha-farnesene and (E,E)-beta-farnesene as minor products. The protein is (E)-beta-ocimene synthase, chloroplastic (TPS02) of Arabidopsis thaliana (Mouse-ear cress).